The primary structure comprises 419 residues: Peptide chain release factor subunit 1 (419 aa).

The protein belongs to the eukaryotic release factor 1 family. Heterodimer of two subunits, one of which binds GTP.

It localises to the cytoplasm. Its function is as follows. Directs the termination of nascent peptide synthesis (translation) in response to the termination codons UAA, UAG and UGA. The polypeptide is Peptide chain release factor subunit 1 (Methanococcus maripaludis (strain C5 / ATCC BAA-1333)).